The chain runs to 393 residues: NAD(P)H-quinone oxidoreductase subunit H, chloroplastic (393 aa).

Belongs to the complex I 49 kDa subunit family. In terms of assembly, NDH is composed of at least 16 different subunits, 5 of which are encoded in the nucleus.

Its subcellular location is the plastid. The protein localises to the chloroplast thylakoid membrane. It catalyses the reaction a plastoquinone + NADH + (n+1) H(+)(in) = a plastoquinol + NAD(+) + n H(+)(out). It carries out the reaction a plastoquinone + NADPH + (n+1) H(+)(in) = a plastoquinol + NADP(+) + n H(+)(out). NDH shuttles electrons from NAD(P)H:plastoquinone, via FMN and iron-sulfur (Fe-S) centers, to quinones in the photosynthetic chain and possibly in a chloroplast respiratory chain. The immediate electron acceptor for the enzyme in this species is believed to be plastoquinone. Couples the redox reaction to proton translocation, and thus conserves the redox energy in a proton gradient. This Nicotiana sylvestris (Wood tobacco) protein is NAD(P)H-quinone oxidoreductase subunit H, chloroplastic.